Reading from the N-terminus, the 520-residue chain is GMP synthase [glutamine-hydrolyzing] (520 aa).

The Glutamine amidotransferase type-1 domain maps to 9–202 (RVLIVDFGSQ…LFNIAGLKGD (194 aa)). Catalysis depends on Cys86, which acts as the Nucleophile. Residues His176 and Glu178 contribute to the active site. The GMPS ATP-PPase domain occupies 203–395 (WTMAAFRQEM…LGLAPAFVGR (193 aa)). Residue 230–236 (SGGVDSS) coordinates ATP.

As to quaternary structure, homodimer.

It catalyses the reaction XMP + L-glutamine + ATP + H2O = GMP + L-glutamate + AMP + diphosphate + 2 H(+). It participates in purine metabolism; GMP biosynthesis; GMP from XMP (L-Gln route): step 1/1. Functionally, catalyzes the synthesis of GMP from XMP. The sequence is that of GMP synthase [glutamine-hydrolyzing] from Caulobacter vibrioides (strain ATCC 19089 / CIP 103742 / CB 15) (Caulobacter crescentus).